The primary structure comprises 248 residues: ATP synthase subunit a, chloroplastic (248 aa).

Helical transmembrane passes span 38 to 58, 96 to 116, 135 to 155, 200 to 220, and 221 to 241; these read QVLI…TIVV, VPFI…GALL, INTT…AGIS, LVVV…VMFL, and GLFT…AYIG.

Belongs to the ATPase A chain family. As to quaternary structure, F-type ATPases have 2 components, CF(1) - the catalytic core - and CF(0) - the membrane proton channel. CF(1) has five subunits: alpha(3), beta(3), gamma(1), delta(1), epsilon(1). CF(0) has four main subunits: a, b, b' and c.

The protein resides in the plastid. The protein localises to the chloroplast thylakoid membrane. Functionally, key component of the proton channel; it plays a direct role in the translocation of protons across the membrane. This Amborella trichopoda protein is ATP synthase subunit a, chloroplastic.